The following is a 591-amino-acid chain: Serine/threonine-protein kinase Nek2 (591 aa).

Residues 4–258 (YEVLEQIGKG…AAQLLKHPQL (255 aa)) form the Protein kinase domain. Residues 10–18 (IGKGAFGSA) and lysine 33 each bind ATP. The active-site Proton acceptor is the aspartate 129. 3 disordered regions span residues 309-331 (LGNERTVTFSKPSPERNSVSSTR), 382-408 (ARNQLEPPKTSYNRTYRSELPSKTTPN), and 500-534 (RTDGDNGSDSSGRNATAASSRGSNDSRQQRFDTSS). Polar residues-rich tracts occupy residues 391-408 (TSYNRTYRSELPSKTTPN) and 504-534 (DNGSDSSGRNATAASSRGSNDSRQQRFDTSS).

This sequence belongs to the protein kinase superfamily. NEK Ser/Thr protein kinase family. NIMA subfamily. In terms of tissue distribution, expressed in anthers, pistils and leaves.

The catalysed reaction is L-seryl-[protein] + ATP = O-phospho-L-seryl-[protein] + ADP + H(+). It catalyses the reaction L-threonyl-[protein] + ATP = O-phospho-L-threonyl-[protein] + ADP + H(+). In terms of biological role, may be involved in plant development processes. The protein is Serine/threonine-protein kinase Nek2 of Oryza sativa subsp. japonica (Rice).